A 273-amino-acid polypeptide reads, in one-letter code: Zinc finger protein AZF2 (273 aa).

The tract at residues 33-64 (LKRKRSKRQRSHSPSSSSSSPPRSRPKSQNQD) is disordered. The span at 34 to 43 (KRKRSKRQRS) shows a compositional bias: basic residues. Over residues 44–54 (HSPSSSSSSPP) the composition is skewed to low complexity. 2 consecutive C2H2-type zinc fingers follow at residues 106–128 (YKCN…KASH) and 165–187 (HECS…KRCH). The interval 195–215 (GGGGGSKSISHSGSVSSTVSE) is disordered. A compositionally biased stretch (low complexity) spans 201–213 (KSISHSGSVSSTV).

Expressed in roots, radicles, cotyledons, hypocotyls, leaf veins, stems, sepals, petals, stamens, placenta, funiculi and maturated seeds.

It is found in the nucleus. In terms of biological role, transcriptional repressor involved in the inhibition of plant growth under abiotic stress conditions. Can repress the expression of various genes, including osmotic stress and abscisic acid-repressive genes and auxin-inducible genes, by binding to their promoter regions in a DNA sequence-specific manner. Acts as a negative regulator of abscisic acid (ABA) signaling during seed germination. Probably involved in jasmonate (JA) early signaling response. May regulate the expression of the JA biosynthesis gene LOX3 and control the expression of TIFY10A/JAZ1, a key repressor in the JA signaling cascade. May act as a positive regulator of leaf senescence. Has been identified as a suppressor of the deficiency of yeast snf4 mutant to grow on non-fermentable carbon source. This chain is Zinc finger protein AZF2 (AZF2), found in Arabidopsis thaliana (Mouse-ear cress).